We begin with the raw amino-acid sequence, 194 residues long: Large ribosomal subunit protein bL25 (194 aa).

It belongs to the bacterial ribosomal protein bL25 family. CTC subfamily. Part of the 50S ribosomal subunit; part of the 5S rRNA/L5/L18/L25 subcomplex. Contacts the 5S rRNA. Binds to the 5S rRNA independently of L5 and L18.

In terms of biological role, this is one of the proteins that binds to the 5S RNA in the ribosome where it forms part of the central protuberance. In Geotalea uraniireducens (strain Rf4) (Geobacter uraniireducens), this protein is Large ribosomal subunit protein bL25.